The chain runs to 807 residues: Glycerol-3-phosphate acyltransferase (807 aa).

Residues 305–310 carry the HXXXXD motif motif; that stretch reads CHRSHM.

This sequence belongs to the GPAT/DAPAT family.

The protein localises to the cell inner membrane. It carries out the reaction sn-glycerol 3-phosphate + an acyl-CoA = a 1-acyl-sn-glycero-3-phosphate + CoA. It functions in the pathway phospholipid metabolism; CDP-diacylglycerol biosynthesis; CDP-diacylglycerol from sn-glycerol 3-phosphate: step 1/3. The polypeptide is Glycerol-3-phosphate acyltransferase (Aliivibrio fischeri (strain ATCC 700601 / ES114) (Vibrio fischeri)).